Consider the following 188-residue polypeptide: Tumor necrosis factor alpha-induced protein 8-like protein (188 aa).

The protein belongs to the TNFAIP8 family.

The chain is Tumor necrosis factor alpha-induced protein 8-like protein from Drosophila pseudoobscura pseudoobscura (Fruit fly).